The following is a 578-amino-acid chain: MKASRFFIGTLKEAPADAEIVSHKLMVRAGMIRRVAGGIYNYLPVGLRSIRKVEAIVREEMNRAGAIELLMPAVQPAELWQESGRWEQYGPELLRFKDRKQNEFVIGPTHEEVVTDIARNQIKSYRQMPVNFYQIQTKFRDEIRPRFGVMRGREFIMKDAYSFDKDHESLKESYKKMYDAYVRIFTRIGLEFRPVAADNGSIGGSGSHEFHVIADTGEDAIAYCPTSDFAANVEAAEALPLLASRAAPAEAMQKVATPGKAKCEAVAELMGIPLERTIKSIVLATDNEGAEPTIWLLMLRGDHDLNEIKTAKLPGLAGHRFATEAEIVEWFGTPPGYLGPIGTKKPVRVVADRTVANMSDFVVGANEVDYHIAGVNWGRDLPEPVVADIRNVKAGDPSPDGKGALDICRGIEVGHVFQLGTKYSDAMGATFIDESGKAQPMVMGCYGIGITRILGAAIEQNFDDKGIVWPEAIAPFEVVLCPMGYDRSDAVREAADKLYADLAAAGIDVILDDRGERPGVMFADWELIGVPHRLVIGERGLKDGKIEYQGRRDAEATLLPADSAAAAVAEKVRAALAR.

The protein belongs to the class-II aminoacyl-tRNA synthetase family. ProS type 1 subfamily. In terms of assembly, homodimer.

It is found in the cytoplasm. It carries out the reaction tRNA(Pro) + L-proline + ATP = L-prolyl-tRNA(Pro) + AMP + diphosphate. Its function is as follows. Catalyzes the attachment of proline to tRNA(Pro) in a two-step reaction: proline is first activated by ATP to form Pro-AMP and then transferred to the acceptor end of tRNA(Pro). As ProRS can inadvertently accommodate and process non-cognate amino acids such as alanine and cysteine, to avoid such errors it has two additional distinct editing activities against alanine. One activity is designated as 'pretransfer' editing and involves the tRNA(Pro)-independent hydrolysis of activated Ala-AMP. The other activity is designated 'posttransfer' editing and involves deacylation of mischarged Ala-tRNA(Pro). The misacylated Cys-tRNA(Pro) is not edited by ProRS. This is Proline--tRNA ligase from Burkholderia pseudomallei (strain K96243).